The chain runs to 423 residues: Gamma-glutamyl phosphate reductase (423 aa).

It belongs to the gamma-glutamyl phosphate reductase family.

Its subcellular location is the cytoplasm. It carries out the reaction L-glutamate 5-semialdehyde + phosphate + NADP(+) = L-glutamyl 5-phosphate + NADPH + H(+). It functions in the pathway amino-acid biosynthesis; L-proline biosynthesis; L-glutamate 5-semialdehyde from L-glutamate: step 2/2. Its function is as follows. Catalyzes the NADPH-dependent reduction of L-glutamate 5-phosphate into L-glutamate 5-semialdehyde and phosphate. The product spontaneously undergoes cyclization to form 1-pyrroline-5-carboxylate. The protein is Gamma-glutamyl phosphate reductase of Pseudomonas fluorescens (strain Pf0-1).